The following is a 110-amino-acid chain: Large ribosomal subunit protein uL22 (110 aa).

The protein belongs to the universal ribosomal protein uL22 family. In terms of assembly, part of the 50S ribosomal subunit.

Its function is as follows. This protein binds specifically to 23S rRNA; its binding is stimulated by other ribosomal proteins, e.g. L4, L17, and L20. It is important during the early stages of 50S assembly. It makes multiple contacts with different domains of the 23S rRNA in the assembled 50S subunit and ribosome. In terms of biological role, the globular domain of the protein is located near the polypeptide exit tunnel on the outside of the subunit, while an extended beta-hairpin is found that lines the wall of the exit tunnel in the center of the 70S ribosome. The sequence is that of Large ribosomal subunit protein uL22 from Paraburkholderia phytofirmans (strain DSM 17436 / LMG 22146 / PsJN) (Burkholderia phytofirmans).